Reading from the N-terminus, the 1318-residue chain is MAETKSAPIFRNRVIDKKQLKKLIGWTFAHYGTAKTAVVADDLKALGFRYATRAGVSISIDDLKVPGSKAELLESAEKRIQETEDRYTRGEITEVERFQKVIDTWANTNDELTDRVVKNFRESDPLNSVYMMAFSGARGNISQVRQLVGMRGLMANPQGEIIDLPIKTNFREGLTVTEYIISSYGARKGLVDTALRTADSGYLTRRLVDVSQDVIIHEVDCGTSRGLFVEAMTDGDRILIPISQRLLGRVTAEAVLDPSTDEVLAEAGQDINEDLANRIEKAGIKKVKVRSPLTCEAARSVCQKCYGWSLAHAQMVDMGEAVGIIAAQSIGEPGTQLTMRTFHTGGVFTGETARLLRAPVAGTIKLGKKARTRPYRTRHGEEALLAEANFDLVLEGKGRKETFAILQGSTIFVQDGDKVAAEAILAEVPVSGRTKRTVEKATKDVATDLAGEIRFQDIVPEEKTDRQGNTTRIAQRGGLLWVLAGDVYNLLPGAEPTVKNGDRVEVGDVLAETKLTTERGGTVRMGEDNGSSTHREVEIITASVVLDTATVKAEASQGREHYVIETKGGQRFNLLAAPGTKVTTGHVVAELIDSRYRTQTGGLLKYSGVEISKKGRAKAKQGYEVTKGGTLLWIPEETHEVNKDISLLNVEDGQLVEAGTEVVKDIFCQTTGIVSVTQNNDILREIVIKPGDVHVLDDPDTAAKYDEGRLVNAGEEVFPGLTAEQLVWAEAVDGTDGPLLLLRPVQELVIPDEPPVPSQDSSQESSSRSIRLRAVQRLQFQDGERIKSVEGVDLLRTQLVLESEEGSSQLSADIELLPDSKDPETLRLQLVIIEPVVTRRDVASDTTHGSTHTELRVKDGQKVKPGAVIACTQIQCKEAGVVRGIQEGSEAVRRLLVERERDCVTLDLDVTAATQLQPGSLIVAGTQLVDGIIAPESGEARAIAPGQLQLRIARPYRVSQGAVLHVEDKGLVQRGDNLVLLVFERAKTGDIIQGLPRIEELLEARKPKEACILARRPGVAHINYSDDDAIDIQVIEADGTQADYPVGPGQPLIISDGETVDAGQALTDGPANPHDLLEIYYDYFREQLGEDYEAALESLRRVQALLVNEVQSVYQSQGIDISDKHIEVIVRQMTSKVRIDDGGDTIMLPGELHELREVYNSNNTMALTGMAPAQFTPVLLGITKASLNTNSFISAASFQETTRVLTEAAIEGKSDWLRGLKENVIIGRLIPAGTGFKAYEESLLTDVDGGYEDRVYDDDLADVVIDDRAARSYTLNEGRDFSRSMTFAEGESMILDDGEELIDDSSASLRNLVDVDED.

Zn(2+)-binding residues include cysteine 221, cysteine 295, cysteine 302, and cysteine 305.

Belongs to the RNA polymerase beta' chain family. RpoC2 subfamily. In terms of assembly, in cyanobacteria the RNAP catalytic core is composed of 2 alpha, 1 beta, 1 beta', 1 gamma and 1 omega subunit. When a sigma factor is associated with the core the holoenzyme is formed, which can initiate transcription. Zn(2+) serves as cofactor.

The enzyme catalyses RNA(n) + a ribonucleoside 5'-triphosphate = RNA(n+1) + diphosphate. Functionally, DNA-dependent RNA polymerase catalyzes the transcription of DNA into RNA using the four ribonucleoside triphosphates as substrates. The sequence is that of DNA-directed RNA polymerase subunit beta' from Synechococcus sp. (strain ATCC 27144 / PCC 6301 / SAUG 1402/1) (Anacystis nidulans).